The following is a 341-amino-acid chain: GTP 3',8-cyclase (341 aa).

The region spanning 11 to 231 (KRERPLRDLR…DLINQHMPTE (221 aa)) is the Radical SAM core domain. Arginine 20 provides a ligand contact to GTP. [4Fe-4S] cluster-binding residues include cysteine 27 and cysteine 31. An S-adenosyl-L-methionine-binding site is contributed by tyrosine 33. Position 34 (cysteine 34) interacts with [4Fe-4S] cluster. Arginine 75 lines the GTP pocket. Glycine 79 serves as a coordination point for S-adenosyl-L-methionine. Residue threonine 106 coordinates GTP. Serine 130 is a binding site for S-adenosyl-L-methionine. GTP is bound at residue lysine 167. Methionine 201 is an S-adenosyl-L-methionine binding site. Residues cysteine 265 and cysteine 268 each contribute to the [4Fe-4S] cluster site. 270-272 (RAR) is a binding site for GTP. Cysteine 282 contributes to the [4Fe-4S] cluster binding site.

The protein belongs to the radical SAM superfamily. MoaA family. In terms of assembly, monomer and homodimer. [4Fe-4S] cluster serves as cofactor.

The catalysed reaction is GTP + AH2 + S-adenosyl-L-methionine = (8S)-3',8-cyclo-7,8-dihydroguanosine 5'-triphosphate + 5'-deoxyadenosine + L-methionine + A + H(+). The protein operates within cofactor biosynthesis; molybdopterin biosynthesis. Its function is as follows. Catalyzes the cyclization of GTP to (8S)-3',8-cyclo-7,8-dihydroguanosine 5'-triphosphate. The protein is GTP 3',8-cyclase of Bacillus velezensis (strain DSM 23117 / BGSC 10A6 / LMG 26770 / FZB42) (Bacillus amyloliquefaciens subsp. plantarum).